Here is a 158-residue protein sequence, read N- to C-terminus: Large ribosomal subunit protein uL15 (158 aa).

Over residues 1–13 (MKLNEIKDNEGST) the composition is skewed to basic and acidic residues. The tract at residues 1-45 (MKLNEIKDNEGSTHSRKRLGRGIGSGSGKTGGRGVKGQKSRSGVA) is disordered. Positions 21–35 (RGIGSGSGKTGGRGV) are enriched in gly residues.

The protein belongs to the universal ribosomal protein uL15 family. Part of the 50S ribosomal subunit.

Its function is as follows. Binds to the 23S rRNA. The polypeptide is Large ribosomal subunit protein uL15 (Rhizobium leguminosarum bv. trifolii (strain WSM2304)).